The sequence spans 491 residues: 2,3-bisphosphoglycerate-independent phosphoglycerate mutase (491 aa).

The Mn(2+) site is built by aspartate 11 and serine 61. Serine 61 (phosphoserine intermediate) is an active-site residue. Substrate is bound by residues histidine 118, arginine 147 to aspartate 148, arginine 177, arginine 183, arginine 248 to arginine 251, and lysine 320. Residues aspartate 386, histidine 390, aspartate 427, histidine 428, and histidine 445 each contribute to the Mn(2+) site.

Belongs to the BPG-independent phosphoglycerate mutase family. In terms of assembly, monomer. Requires Mn(2+) as cofactor.

It carries out the reaction (2R)-2-phosphoglycerate = (2R)-3-phosphoglycerate. The protein operates within carbohydrate degradation; glycolysis; pyruvate from D-glyceraldehyde 3-phosphate: step 3/5. Functionally, catalyzes the interconversion of 2-phosphoglycerate and 3-phosphoglycerate. This chain is 2,3-bisphosphoglycerate-independent phosphoglycerate mutase, found in Aliarcobacter butzleri (strain RM4018) (Arcobacter butzleri).